We begin with the raw amino-acid sequence, 411 residues long: Stearoyl-[acyl-carrier-protein] 9-desaturase 2, chloroplastic (411 aa).

A chloroplast-targeting transit peptide spans 1 to 44; sequence MALLLNSTITVAMKQNPLVAVSFPRTTCLGSSFSPPRLLRVSCV. Glutamate 148, glutamate 186, histidine 189, glutamate 239, glutamate 272, and histidine 275 together coordinate Fe cation.

This sequence belongs to the fatty acid desaturase type 2 family. In terms of assembly, homodimer. Fe(2+) is required as a cofactor. In terms of tissue distribution, preferentially expressed in roots and flowers.

It is found in the plastid. The protein localises to the chloroplast. It carries out the reaction octadecanoyl-[ACP] + 2 reduced [2Fe-2S]-[ferredoxin] + O2 + 2 H(+) = (9Z)-octadecenoyl-[ACP] + 2 oxidized [2Fe-2S]-[ferredoxin] + 2 H2O. It functions in the pathway lipid metabolism; fatty acid metabolism. Its function is as follows. Converts stearoyl-ACP to oleoyl-ACP by introduction of a cis double bond between carbons 9 and 10 of the acyl chain. Exhibits delta-9 palmitoyl-[acyl-carrier-protein] desaturase (PAD) activity. Involved in omega-7 monounsaturated fatty acid biosynthesis, especially in the endosperm oil. This is Stearoyl-[acyl-carrier-protein] 9-desaturase 2, chloroplastic (S-ACP-DES2) from Arabidopsis thaliana (Mouse-ear cress).